A 1495-amino-acid polypeptide reads, in one-letter code: MGFEALNWYCKPVADGFWEKAVDGAFGAYTPCAIDSLVMLVSHFVLLGLCFYRIWIIFHNTKAQIYVLRKKYYNCVLGLLACYCVVEPVLRLVMGISLFDMDEETDFPPFEVASLMVEAFAWFSMLVLIGLETKQYVKEFRWYVRFGVLYVLVADAVLLDLVLPLKNSINRTALYLFISSRCSQALFGILLLIYIPELDPYPGYHIVNNEPLDNVEYDALRGGEHICPERHASIFSRIYFGWITPLMQLGYRKPITEKDVWQLDKWDQTETLIKRFQRCWTEESRRPKPWLLRALNNSLGGRFWLAGIFKIGNDLSQFVGPVILSHLLRSMQEGDPAWVGYVYAFIIFVGVTLGVLCEAQYFQNVWRVGFRLRSTLVAAIFHKSLRLTHEARKNFASGKVTNMITTDANALQQISQQLHGLWSAPFRIIVSMILLYQQLGVASLFGSLILFLLIPLQTLIISKMRKLTKEGLQWTDKRVGITNEILSSMDTVKCYAWEKSFESRIQGIRNEELSWFRKAQLLSAFNSFILNSIPVVVTVVSFGVFVLLGGDLTPARAFTSLSLFAVLRFPLNMLPNLLSQVVNANVSLQRIEELLLSEERILAQNPPLQPGTPAISIKNGYFSWDSKTTKPTLSDINLEIPVGTLVAIVGGTGEGKTSLISAMLGELSHAETTSVVIRGSVAYVPQVSWIFNATVRENILFGSDFESERYWRAIDATALQHDLDLLPGRDLTEIGERGVNISGGQKQRVSMARAVYSNSDVYIFDDPLSALDAHVAHQVFDSCMKDELRGKTRVLVTNQLHFLPLMDKIILVSEGMIKEEGTFVELSKSGILFKKLMENAGKMDATQEVNTNDENILKLGPTVTVDVSERNLGSTKQGKRRRSVLIKQEERETGIISWNVLMRYKEAVGGLWVVMILLACYLATEVLRVSSSTWLSIWTDQSTSKNYSPGFYIVVYALLGFGQVAVTFTNSFWLITSSLHAARRLHDAMLSSILRAPMLFFHTNPTGRVINRFSKDIGDIDRNVANLMNMFMNQLWQLLSTFALIGTVSTISLWAIMPLLILFYAAYLYYQSTSREVRRLDSVTRSPIYAQFGEALNGLSSIRAYKAYDRMAKINGKSMDNNIRFTLANTSSNRWLTIRLETLGGVMIWLTATFAVLQNGNTNNQAGFASTMGLLLSYTLNITSLLSGVLRQASRAENSLNSVERVGNYIDLPSEATDIIENNRPVCGWPSGGSIKFEDVHLRYRPGLPPVLHGLTFFVSPSEKVGVVGRTGAGKSSMLNALFRIVEVEKGRIMIDDCDVAKFGLTDVRRVLSIIPQSPVLFSGTVRFNIDPFSEHNDAGLWEALHRAHIKDVISRNPFGLDAEVCEGGENFSVGQRQLLSLARALLRRSKILVLDEATASVDVRTDSLIQRTIREEFKSCTMLVIAHRLNTIIDCDKILVLSSGQVLEYDSPQELLSRDTSAFFRMVHSTGPANAQYLSNLVFERRENGMSVGG.

The next 11 membrane-spanning stretches (helical) occupy residues 38–58 (VMLVSHFVLLGLCFYRIWIIF), 76–96 (VLGLLACYCVVEPVLRLVMGI), 110–130 (FEVASLMVEAFAWFSMLVLIG), 146–166 (FGVLYVLVADAVLLDLVLPLK), 173–195 (ALYLFISSRCSQALFGILLLIYI), 303–323 (FWLAGIFKIGNDLSQFVGPVI), 337–357 (AWVGYVYAFIIFVGVTLGVLC), 420–440 (GLWSAPFRIIVSMILLYQQLG), 441–461 (VASLFGSLILFLLIPLQTLII), 528–548 (FILNSIPVVVTVVSFGVFVLL), and 558–578 (FTSLSLFAVLRFPLNMLPNLL). The region spanning 303-583 (FWLAGIFKIG…LPNLLSQVVN (281 aa)) is the ABC transmembrane type-1 1 domain. The region spanning 615 to 839 (ISIKNGYFSW…GILFKKLMEN (225 aa)) is the ABC transporter 1 domain. Position 650–657 (650–657 (GGTGEGKT)) interacts with ATP. Transmembrane regions (helical) follow at residues 907–927 (AVGGLWVVMILLACYLATEVL), 949–969 (PGFYIVVYALLGFGQVAVTFT), 1042–1062 (FALIGTVSTISLWAIMPLLIL), 1140–1160 (LETLGGVMIWLTATFAVLQNG), and 1166–1186 (AGFASTMGLLLSYTLNITSLL). An ABC transmembrane type-1 2 domain is found at 914–1198 (VMILLACYLA…VLRQASRAEN (285 aa)). In terms of domain architecture, ABC transporter 2 spans 1235-1469 (IKFEDVHLRY…DTSAFFRMVH (235 aa)). Position 1269–1276 (1269–1276 (GRTGAGKS)) interacts with ATP.

It belongs to the ABC transporter superfamily. ABCC family. Conjugate transporter (TC 3.A.1.208) subfamily. In terms of tissue distribution, ubiquitous.

It is found in the membrane. The enzyme catalyses ATP + H2O + xenobioticSide 1 = ADP + phosphate + xenobioticSide 2.. In terms of biological role, pump for glutathione S-conjugates. This chain is ABC transporter C family member 12 (ABCC12), found in Arabidopsis thaliana (Mouse-ear cress).